We begin with the raw amino-acid sequence, 332 residues long: Cell growth regulator with RING finger domain protein 1 (332 aa).

The RING-type zinc-finger motif lies at 274–309 (CVVCQNGGVNWVLLPCRHACLCDSCVRYFKQCPMCR).

It is found in the nucleus. It localises to the endoplasmic reticulum. In terms of biological role, able to inhibit growth in several cell lines. The polypeptide is Cell growth regulator with RING finger domain protein 1 (Cgrrf1) (Mus musculus (Mouse)).